Consider the following 160-residue polypeptide: SsrA-binding protein (160 aa).

Belongs to the SmpB family.

Its subcellular location is the cytoplasm. Its function is as follows. Required for rescue of stalled ribosomes mediated by trans-translation. Binds to transfer-messenger RNA (tmRNA), required for stable association of tmRNA with ribosomes. tmRNA and SmpB together mimic tRNA shape, replacing the anticodon stem-loop with SmpB. tmRNA is encoded by the ssrA gene; the 2 termini fold to resemble tRNA(Ala) and it encodes a 'tag peptide', a short internal open reading frame. During trans-translation Ala-aminoacylated tmRNA acts like a tRNA, entering the A-site of stalled ribosomes, displacing the stalled mRNA. The ribosome then switches to translate the ORF on the tmRNA; the nascent peptide is terminated with the 'tag peptide' encoded by the tmRNA and targeted for degradation. The ribosome is freed to recommence translation, which seems to be the essential function of trans-translation. The protein is SsrA-binding protein of Klebsiella pneumoniae (strain 342).